The sequence spans 251 residues: Gamma-glutamyl peptidase 4 (251 aa).

The 198-residue stretch at 16–213 (SEFAKKTYGG…IDRVLAGGHI (198 aa)) folds into the Glutamine amidotransferase type-1 domain. Cys-100 (nucleophile) is an active-site residue. Catalysis depends on residues His-192 and Glu-194.

It belongs to the peptidase C26 family.

It localises to the cytoplasm. Its subcellular location is the cytosol. The protein operates within secondary metabolite biosynthesis. Functionally, involved in glucosinolate biosynthesis. Hydrolyzes the gamma-glutamyl peptide bond of several glutathione (GSH) conjugates to produce Cys-Gly conjugates related to glucosinolates. The gamma-Glu-Cys-Gly-GSH conjugates are the sulfur-donating molecule in glucosinolate biosynthesis. The protein is Gamma-glutamyl peptidase 4 of Arabidopsis thaliana (Mouse-ear cress).